The primary structure comprises 478 residues: Dynein regulatory complex subunit 4 (478 aa).

A compositionally biased stretch (basic residues) spans 1 to 12 (MAPKKKGKKGKA). Residues 1-29 (MAPKKKGKKGKAKGTAIVDGVAPEDMTKE) form a disordered region. Residues 1–114 (MAPKKKGKKG…LLYEHQNNLA (114 aa)) form a regulates microtubule-binding region. Coiled-coil stretches lie at residues 24-207 (EDMT…RKTE) and 242-426 (LNNL…ELAR). Positions 115 to 258 (EVKAEGTVVM…NSLKEQMEDM (144 aa)) are microtubule-binding. The segment at 357-478 (QQKTGFKNLL…GPAGLVGAPT (122 aa)) is interaction with SMO.

Belongs to the DRC4 family. In terms of assembly, component of the nexin-dynein regulatory complex (N-DRC). Interacts with microtubules. Interacts with SMO. Interacts (via coiled-coil domains) with RAB3B (in GTP-bound form). Interacts with DRC1. Interacts with DRC7. As to expression, highly expressed in adult testes and lung. Weakly or not expressed in other tested tissues.

Its subcellular location is the cytoplasm. It is found in the cytoskeleton. The protein localises to the cell projection. The protein resides in the cilium. It localises to the flagellum. Its subcellular location is the cilium axoneme. It is found in the cilium basal body. The protein localises to the golgi apparatus. The protein resides in the flagellum axoneme. Functionally, component of the nexin-dynein regulatory complex (N-DRC), a key regulator of ciliary/flagellar motility which maintains the alignment and integrity of the distal axoneme and regulates microtubule sliding in motile axonemes. Plays an important role in the assembly of the N-DRC linker. Plays dual roles at both the primary (or non-motile) cilia to regulate hedgehog signaling and in motile cilia to coordinate cilia movement. Required for proper motile cilia functioning. Positively regulates ciliary smoothened (SMO)-dependent Hedgehog (Hh) signaling pathway by facilitating the trafficking of SMO into the cilium and the stimulation of SMO activity in a GRK2-dependent manner. May play a role in the spermatozoa motility. This chain is Dynein regulatory complex subunit 4 (Gas8), found in Mus musculus (Mouse).